The primary structure comprises 165 residues: Neurotrophin-3 (165 aa).

Positions 1 to 3 (IQS) are cleaved as a signal peptide. Positions 4–119 (TSMDQGSLSE…VLNRTSRRKR (116 aa)) are excised as a propeptide. The segment at 32–61 (KVPKQAARTKDGTQTTAKKTEAEPEATANK) is disordered. N-linked (GlcNAc...) asparagine glycosylation occurs at Asn112.

The protein belongs to the NGF-beta family.

The protein localises to the secreted. Functionally, seems to promote the survival of visceral and proprioceptive sensory neurons. The chain is Neurotrophin-3 (NTF3) from Xenopeltis unicolor (Sunbeam snake).